Here is a 99-residue protein sequence, read N- to C-terminus: Protein dpy-30 homolog (99 aa).

Met1 carries the N-acetylmethionine modification. Residues 1 to 26 (MESEQMLEGQTQVAENPHSEYGLTDS) form a disordered region. Ser19 carries the post-translational modification Phosphoserine. Lys35 is modified (N6-acetyllysine; alternate). Residue Lys35 forms a Glycyl lysine isopeptide (Lys-Gly) (interchain with G-Cter in SUMO2); alternate linkage.

It belongs to the dpy-30 family. Homodimer. Core component of several methyltransferase-containing complexes including MLL1/MLL, MLL2/3 (also named ASCOM complex) and MLL4/WBP7. Each complex is at least composed of ASH2L, RBBP5, WDR5, DPY30, one or more specific histone methyltransferases (KMT2A/MLL1, KMT2D/MLL2, KMT2C/MLL3 and KMT2B/MLL4), and the facultative components MEN1, HCFC1, HCFC2, NCOA6, KDM6A, PAXIP1/PTIP, PAGR1 and alpha- and beta-tubulin PAXIP1/PTIP, PAGR1 and alpha- and beta-tubulin. Interacts with ASH2L. The interaction with ASH2L is direct. Interacts with ARFGEF1. Component of the SET1 complex, at least composed of the catalytic subunit (SETD1A or SETD1B), WDR5, WDR82, RBBP5, ASH2L/ASH2, CXXC1/CFP1, HCFC1 and DPY30.

It localises to the nucleus. It is found in the golgi apparatus. Its subcellular location is the trans-Golgi network. Its function is as follows. As part of the MLL1/MLL complex, involved in the methylation of histone H3 at 'Lys-4', particularly trimethylation. Histone H3 'Lys-4' methylation represents a specific tag for epigenetic transcriptional activation. May play some role in histone H3 acetylation. In embryonic stem (ES) cells, plays a crucial role in the differentiation potential, particularly along the neural lineage, regulating gene induction and histone H3 'Lys-4' methylation at key developmental loci, including that mediated by retinoic acid. Does not affect ES cell self-renewal. May also play an indirect or direct role in endosomal transport. The chain is Protein dpy-30 homolog (Dpy30) from Mus musculus (Mouse).